A 69-amino-acid polypeptide reads, in one-letter code: Fumarase D (69 aa).

This sequence belongs to the FumD family.

The catalysed reaction is (S)-malate = fumarate + H2O. Its function is as follows. In vitro catalyzes the addition of water to fumarate, forming malate. Cannot catalyze the reverse reaction. Cannot use the cis-isomer maleate as substrate. This is Fumarase D from Shigella flexneri.